Here is a 498-residue protein sequence, read N- to C-terminus: Hexokinase-1 (498 aa).

The chain crosses the membrane as a helical span at residues 4 to 24 (VTVGAAVVGAAAVCAVAALIV). Positions 35 to 488 (GRAMAILREF…SGIGAALLRA (454 aa)) constitute a Hexokinase domain. A hexokinase small subdomain region spans residues 89-228 (QLVMKLGVFY…VLDMRVSALV (140 aa)). 3 residues coordinate ADP: Gly104, Thr105, and Asn106. Residues Thr194, Lys195, Asn229, and Asp230 each contribute to the D-glucose site. The tract at residues 229–477 (NDTVGTLAGG…TSIVFVHSND (249 aa)) is hexokinase large subdomain. Thr253 is an ADP binding site. D-glucose is bound by residues Asn256, Glu284, and Glu315. Gly442 contributes to the ADP binding site.

Belongs to the hexokinase family. In terms of tissue distribution, expressed in young and mature leaves, stems, roots, stolons, and developing and mature tubers.

The protein localises to the plastid. It localises to the chloroplast outer membrane. It carries out the reaction a D-hexose + ATP = a D-hexose 6-phosphate + ADP + H(+). The catalysed reaction is D-fructose + ATP = D-fructose 6-phosphate + ADP + H(+). It catalyses the reaction D-glucose + ATP = D-glucose 6-phosphate + ADP + H(+). It participates in carbohydrate metabolism; hexose metabolism. It functions in the pathway carbohydrate degradation; glycolysis; D-glyceraldehyde 3-phosphate and glycerone phosphate from D-glucose: step 1/4. Fructose and glucose phosphorylating enzyme. May be involved in the phosphorylation of glucose during the export from plastids to cytosol. Seems neither to be involved in cell sugar sensing nor in carbohydrate metabolism in tuber. In Solanum tuberosum (Potato), this protein is Hexokinase-1 (HXK1).